The sequence spans 107 residues: Large ribosomal subunit protein P1 (107 aa).

The segment covering 67–82 (GPASAAPAGAAGAAAP) has biased composition (low complexity). The interval 67 to 107 (GPASAAPAGAAGAAAPAEEKAEEKEEEKEESDEDMGFGLFD) is disordered. Over residues 90-101 (KEEEKEESDEDM) the composition is skewed to acidic residues.

This sequence belongs to the eukaryotic ribosomal protein P1/P2 family. As to quaternary structure, P1 and P2 exist as dimers at the large ribosomal subunit.

The protein localises to the cytoplasm. Plays an important role in the elongation step of protein synthesis. In Penicillium crustosum (Blue mold fungus), this protein is Large ribosomal subunit protein P1.